We begin with the raw amino-acid sequence, 131 residues long: Fluoride-specific ion channel FluC (131 aa).

4 consecutive transmembrane segments (helical) span residues 4 to 24, 30 to 50, 68 to 88, and 104 to 124; these read LWIM…TGFV, GIFP…IGFF, LFVM…SLQT, and IALS…VAVA. Na(+)-binding residues include Gly76 and Thr79.

It belongs to the fluoride channel Fluc/FEX (TC 1.A.43) family.

The protein localises to the cell inner membrane. It carries out the reaction fluoride(in) = fluoride(out). Na(+) is not transported, but it plays an essential structural role and its presence is essential for fluoride channel function. Functionally, fluoride-specific ion channel. Important for reducing fluoride concentration in the cell, thus reducing its toxicity. The protein is Fluoride-specific ion channel FluC of Methylocella silvestris (strain DSM 15510 / CIP 108128 / LMG 27833 / NCIMB 13906 / BL2).